The primary structure comprises 677 residues: UvrABC system protein B (677 aa).

A Helicase ATP-binding domain is found at 31–417 (DRIESGETDI…SDGVVEQIIR (387 aa)). Position 44–51 (44–51 (GATGTGKS)) interacts with ATP. Residues 97–120 (YYDYYQPEAYVPKTDTFIEKDASV) carry the Beta-hairpin motif. One can recognise a Helicase C-terminal domain in the interval 434–596 (QIDDLLEEIR…VTPVPIKKTV (163 aa)). Residues 629 to 664 (KSHIKSLEAKMYMAAESLMFEEAAELRDEIQSLKEK) enclose the UVR domain.

This sequence belongs to the UvrB family. As to quaternary structure, forms a heterotetramer with UvrA during the search for lesions. Interacts with UvrC in an incision complex.

Its subcellular location is the cytoplasm. In terms of biological role, the UvrABC repair system catalyzes the recognition and processing of DNA lesions. A damage recognition complex composed of 2 UvrA and 2 UvrB subunits scans DNA for abnormalities. Upon binding of the UvrA(2)B(2) complex to a putative damaged site, the DNA wraps around one UvrB monomer. DNA wrap is dependent on ATP binding by UvrB and probably causes local melting of the DNA helix, facilitating insertion of UvrB beta-hairpin between the DNA strands. Then UvrB probes one DNA strand for the presence of a lesion. If a lesion is found the UvrA subunits dissociate and the UvrB-DNA preincision complex is formed. This complex is subsequently bound by UvrC and the second UvrB is released. If no lesion is found, the DNA wraps around the other UvrB subunit that will check the other stand for damage. The protein is UvrABC system protein B of Tropheryma whipplei (strain TW08/27) (Whipple's bacillus).